The chain runs to 188 residues: Ribosome-recycling factor (188 aa).

This sequence belongs to the RRF family.

It localises to the cytoplasm. Functionally, responsible for the release of ribosomes from messenger RNA at the termination of protein biosynthesis. May increase the efficiency of translation by recycling ribosomes from one round of translation to another. This Dinoroseobacter shibae (strain DSM 16493 / NCIMB 14021 / DFL 12) protein is Ribosome-recycling factor.